Here is a 160-residue protein sequence, read N- to C-terminus: Nucleotide-binding protein AHA_1129 (160 aa).

This sequence belongs to the YajQ family.

In terms of biological role, nucleotide-binding protein. The sequence is that of Nucleotide-binding protein AHA_1129 from Aeromonas hydrophila subsp. hydrophila (strain ATCC 7966 / DSM 30187 / BCRC 13018 / CCUG 14551 / JCM 1027 / KCTC 2358 / NCIMB 9240 / NCTC 8049).